Reading from the N-terminus, the 440-residue chain is 3-phosphoshikimate 1-carboxyvinyltransferase (440 aa).

Residues Lys-26, Ser-27, and Arg-31 each contribute to the 3-phosphoshikimate site. Lys-26 serves as a coordination point for phosphoenolpyruvate. Phosphoenolpyruvate contacts are provided by Gly-99 and Arg-127. 3-phosphoshikimate is bound by residues Ser-172, Gln-174, Asp-320, and Lys-347. Position 174 (Gln-174) interacts with phosphoenolpyruvate. Residue Asp-320 is the Proton acceptor of the active site. Phosphoenolpyruvate-binding residues include Arg-351 and Arg-392.

It belongs to the EPSP synthase family. Monomer.

Its subcellular location is the cytoplasm. It catalyses the reaction 3-phosphoshikimate + phosphoenolpyruvate = 5-O-(1-carboxyvinyl)-3-phosphoshikimate + phosphate. It functions in the pathway metabolic intermediate biosynthesis; chorismate biosynthesis; chorismate from D-erythrose 4-phosphate and phosphoenolpyruvate: step 6/7. Functionally, catalyzes the transfer of the enolpyruvyl moiety of phosphoenolpyruvate (PEP) to the 5-hydroxyl of shikimate-3-phosphate (S3P) to produce enolpyruvyl shikimate-3-phosphate and inorganic phosphate. This is 3-phosphoshikimate 1-carboxyvinyltransferase from Xanthomonas euvesicatoria pv. vesicatoria (strain 85-10) (Xanthomonas campestris pv. vesicatoria).